A 350-amino-acid polypeptide reads, in one-letter code: UDP-rhamnose/UDP-galactose transporter 3 (350 aa).

Transmembrane regions (helical) follow at residues 12–32, 41–61, 81–101, 104–124, 133–153, 160–180, 200–220, 224–244, 257–277, and 286–306; these read AVSD…IIMA, GFAF…TALV, LIWF…SLML, VGFY…MEWI, EVKI…VTDV, FICA…IGSL, AFSL…KFIM, MSSG…FCNI, SFQV…WLLF, and VAGM…MELE.

Belongs to the TPT transporter family. TPT (TC 2.A.7.9) subfamily.

The protein resides in the golgi apparatus membrane. Nucleotide-sugar transporter that transports UDP-rhamnose or UDP-galactose and UMP in a strict counter-exchange mode. The polypeptide is UDP-rhamnose/UDP-galactose transporter 3 (Arabidopsis thaliana (Mouse-ear cress)).